Here is a 307-residue protein sequence, read N- to C-terminus: UDP-N-acetylenolpyruvoylglucosamine reductase (307 aa).

The FAD-binding PCMH-type domain maps to 34-199; it reads RVGGPAQVLF…TAVRFRGTPS (166 aa). The active site involves Arg-179. The active-site Proton donor is the Ser-228. Residue Glu-298 is part of the active site.

This sequence belongs to the MurB family. It depends on FAD as a cofactor.

Its subcellular location is the cytoplasm. It catalyses the reaction UDP-N-acetyl-alpha-D-muramate + NADP(+) = UDP-N-acetyl-3-O-(1-carboxyvinyl)-alpha-D-glucosamine + NADPH + H(+). It participates in cell wall biogenesis; peptidoglycan biosynthesis. Its function is as follows. Cell wall formation. This Bradyrhizobium sp. (strain ORS 278) protein is UDP-N-acetylenolpyruvoylglucosamine reductase.